The chain runs to 48 residues: Phospholipase A2 superbin d (48 aa).

Residues Tyr28, Gly30, and Gly32 each contribute to the Ca(2+) site. Cys29 and Cys45 form a disulfide bridge. His48 is a catalytic residue.

The cofactor is Ca(2+). In terms of tissue distribution, expressed by the venom gland.

The protein resides in the secreted. The enzyme catalyses a 1,2-diacyl-sn-glycero-3-phosphocholine + H2O = a 1-acyl-sn-glycero-3-phosphocholine + a fatty acid + H(+). Functionally, snake venom phospholipase A2 (PLA2) that inhibits collagen-induced platelet aggregation. In terms of inhibition of platelet aggregation, superbin d is less potent as superbin a, b, and c. PLA2 catalyzes the calcium-dependent hydrolysis of the 2-acyl groups in 3-sn-phosphoglycerides. This chain is Phospholipase A2 superbin d, found in Austrelaps superbus (Lowland copperhead snake).